We begin with the raw amino-acid sequence, 505 residues long: Serine/threonine-protein kinase D (505 aa).

Residues 9–271 (YEIVKSLGSG…AMYQALHSLI (263 aa)) form the Protein kinase domain. Residues 15–23 (LGSGGFGDT) and Lys-40 contribute to the ATP site. The Proton acceptor role is filled by Asp-136. Residues 436–505 (GASATIGGIP…GWIASQLVNF (70 aa)) enclose the SH3b domain.

It belongs to the protein kinase superfamily. Ser/Thr protein kinase family.

It carries out the reaction L-seryl-[protein] + ATP = O-phospho-L-seryl-[protein] + ADP + H(+). The catalysed reaction is L-threonyl-[protein] + ATP = O-phospho-L-threonyl-[protein] + ADP + H(+). This is Serine/threonine-protein kinase D (spkD) from Synechocystis sp. (strain ATCC 27184 / PCC 6803 / Kazusa).